A 723-amino-acid chain; its full sequence is tRNA (guanine(27)-N(2))-dimethyltransferase (723 aa).

Residues methionine 1–leucine 10 show a composition bias toward acidic residues. The tract at residues methionine 1–glutamate 72 is disordered. Threonine 23 carries the post-translational modification Phosphothreonine. The span at proline 32–proline 44 shows a compositional bias: low complexity. Pro residues predominate over residues aspartate 45 to alanine 59. Serine 61 is subject to Phosphoserine. Residues histidine 128–arginine 132 carry the Nucleolar localization signal motif. The C2H2-type zinc finger occupies tyrosine 177 to histidine 199. Residues glutamate 220–leucine 679 form the Trm1 methyltransferase domain. 4 residues coordinate S-adenosyl-L-methionine: arginine 253, aspartate 300, aspartate 348, and alanine 349. Zn(2+)-binding residues include cysteine 479, cysteine 482, cysteine 504, and cysteine 506. Residue lysine 576 forms a Glycyl lysine isopeptide (Lys-Gly) (interchain with G-Cter in SUMO2) linkage. Serine 603 bears the Phosphoserine mark.

This sequence belongs to the class I-like SAM-binding methyltransferase superfamily. Trm1 family.

Its subcellular location is the nucleus. The protein resides in the nucleolus. It carries out the reaction guanosine(27) in tRNA(Tyr) + 2 S-adenosyl-L-methionine = N(2)-dimethylguanosine(27) in tRNA(Tyr) + 2 S-adenosyl-L-homocysteine + 2 H(+). Functionally, specifically dimethylates a single guanine residue at position 27 of tRNA(Tyr) using S-adenosyl-L-methionine as donor of the methyl groups. Dimethylation at position 27 of tRNA(Tyr) is required for efficient translation of tyrosine codons. Also required to maintain 3-(3-amino-3-carboxypropyl)uridine (acp3U) in the D-loop of several cytoplasmic tRNAs. This chain is tRNA (guanine(27)-N(2))-dimethyltransferase, found in Rattus norvegicus (Rat).